Here is a 255-residue protein sequence, read N- to C-terminus: Hydroxyacylglutathione hydrolase (255 aa).

7 residues coordinate Zn(2+): His-56, His-58, Asp-60, His-61, His-114, Asp-133, and His-171.

This sequence belongs to the metallo-beta-lactamase superfamily. Glyoxalase II family. Monomer. The cofactor is Zn(2+).

It carries out the reaction an S-(2-hydroxyacyl)glutathione + H2O = a 2-hydroxy carboxylate + glutathione + H(+). It participates in secondary metabolite metabolism; methylglyoxal degradation; (R)-lactate from methylglyoxal: step 2/2. Functionally, thiolesterase that catalyzes the hydrolysis of S-D-lactoyl-glutathione to form glutathione and D-lactic acid. The protein is Hydroxyacylglutathione hydrolase of Rhodopseudomonas palustris (strain BisB18).